A 214-amino-acid chain; its full sequence is MRLRNIPGSREYIAQNDYVVHDPEQKKGKWHEVFGNNNPIHIEIGMGKGQFITSLAMQNPNINYIGIEKYSSVLLRAIEKREEYEGDNLYFLRFDAESITDIFAPSEVDRIYLNFSDPWPKDRHSKRRLTSSEFLARYDQFLVKDGYVAFKTDNRDLFDFSLEQVTLSGWQLRDVTFDLHHSEYVEGNIMTEYEERFSSMGNPIHRLVAFREKE.

Glutamate 43, glutamate 68, aspartate 95, and aspartate 117 together coordinate S-adenosyl-L-methionine. Aspartate 117 is a catalytic residue. Residues lysine 121, aspartate 153, and 191–194 (TEYE) contribute to the substrate site.

It belongs to the class I-like SAM-binding methyltransferase superfamily. TrmB family.

The enzyme catalyses guanosine(46) in tRNA + S-adenosyl-L-methionine = N(7)-methylguanosine(46) in tRNA + S-adenosyl-L-homocysteine. Its pathway is tRNA modification; N(7)-methylguanine-tRNA biosynthesis. In terms of biological role, catalyzes the formation of N(7)-methylguanine at position 46 (m7G46) in tRNA. This chain is tRNA (guanine-N(7)-)-methyltransferase, found in Lachnoclostridium phytofermentans (strain ATCC 700394 / DSM 18823 / ISDg) (Clostridium phytofermentans).